We begin with the raw amino-acid sequence, 217 residues long: Protein GrpE (217 aa).

Basic and acidic residues predominate over residues 1–10 (MSDHAEHAAD). The interval 1–39 (MSDHAEHAADAADTDAPEGDDAGGDDGEQAGDDGTSALS) is disordered. Residues 12 to 31 (ADTDAPEGDDAGGDDGEQAG) are compositionally biased toward acidic residues.

This sequence belongs to the GrpE family. Homodimer.

Its subcellular location is the cytoplasm. Participates actively in the response to hyperosmotic and heat shock by preventing the aggregation of stress-denatured proteins, in association with DnaK and GrpE. It is the nucleotide exchange factor for DnaK and may function as a thermosensor. Unfolded proteins bind initially to DnaJ; upon interaction with the DnaJ-bound protein, DnaK hydrolyzes its bound ATP, resulting in the formation of a stable complex. GrpE releases ADP from DnaK; ATP binding to DnaK triggers the release of the substrate protein, thus completing the reaction cycle. Several rounds of ATP-dependent interactions between DnaJ, DnaK and GrpE are required for fully efficient folding. This is Protein GrpE from Halobacterium salinarum (strain ATCC 29341 / DSM 671 / R1).